Reading from the N-terminus, the 84-residue chain is Small ribosomal subunit protein uS17 (84 aa).

Belongs to the universal ribosomal protein uS17 family. In terms of assembly, part of the 30S ribosomal subunit.

Functionally, one of the primary rRNA binding proteins, it binds specifically to the 5'-end of 16S ribosomal RNA. This Moorella thermoacetica (strain ATCC 39073 / JCM 9320) protein is Small ribosomal subunit protein uS17.